We begin with the raw amino-acid sequence, 376 residues long: Chaperone protein DnaJ (376 aa).

One can recognise a J domain in the interval 4-68 (DYYQLLGVAR…ETRARYDQFG (65 aa)). The CR-type zinc finger occupies 135-217 (GGEKEIRVTH…CGGAGRLRRP (83 aa)). 8 residues coordinate Zn(2+): cysteine 148, cysteine 151, cysteine 165, cysteine 168, cysteine 191, cysteine 194, cysteine 205, and cysteine 208. CXXCXGXG motif repeat units lie at residues 148 to 155 (CGTCQGSG), 165 to 172 (CTTCGGAG), 191 to 198 (CPTCEGSG), and 205 to 212 (CDDCGGAG).

The protein belongs to the DnaJ family. As to quaternary structure, homodimer. Zn(2+) is required as a cofactor.

The protein resides in the cytoplasm. Functionally, participates actively in the response to hyperosmotic and heat shock by preventing the aggregation of stress-denatured proteins and by disaggregating proteins, also in an autonomous, DnaK-independent fashion. Unfolded proteins bind initially to DnaJ; upon interaction with the DnaJ-bound protein, DnaK hydrolyzes its bound ATP, resulting in the formation of a stable complex. GrpE releases ADP from DnaK; ATP binding to DnaK triggers the release of the substrate protein, thus completing the reaction cycle. Several rounds of ATP-dependent interactions between DnaJ, DnaK and GrpE are required for fully efficient folding. Also involved, together with DnaK and GrpE, in the DNA replication of plasmids through activation of initiation proteins. The sequence is that of Chaperone protein DnaJ from Synechococcus sp. (strain ATCC 27144 / PCC 6301 / SAUG 1402/1) (Anacystis nidulans).